Consider the following 218-residue polypeptide: 3-oxo-tetronate 4-phosphate decarboxylase (218 aa).

The Proton acceptor role is filled by Glu86. Residues Glu86, His105, and His107 each coordinate Zn(2+). The Proton donor role is filled by Tyr132. A Zn(2+)-binding site is contributed by His172.

Belongs to the aldolase class II family. AraD/FucA subfamily. Zn(2+) is required as a cofactor.

The catalysed reaction is 3-dehydro-4-O-phospho-D-erythronate + H(+) = dihydroxyacetone phosphate + CO2. It carries out the reaction 3-dehydro-4-O-phospho-L-erythronate + H(+) = dihydroxyacetone phosphate + CO2. Its function is as follows. Catalyzes the decarboxylation of 3-oxo-tetronate 4-phosphate to dihydroxyacetone phosphate (DHAP) and CO(2). The polypeptide is 3-oxo-tetronate 4-phosphate decarboxylase (Pectobacterium atrosepticum (strain SCRI 1043 / ATCC BAA-672) (Erwinia carotovora subsp. atroseptica)).